The primary structure comprises 407 residues: MMVMVELLSPANDLTCLKTAIDYGADAVYCGLKELNMRANAKNFTREELIEGIKYAHDNNKKVYLCTNTVVYENDLKKVEEILDFANSAEVDAVIVSDLGTMQLANELGLRVHASVQCNVTNSLTAKFYSKFAKRVILSRELTLNQIKEIRENLKKDKVDLELEGFVHGALCVAISGRCFLSSYLFGRHANCGDCLQPCRRKWKLINEHHDGTYEIVCEGKYLLSPKDLCMIEHIPELMEVFDSFKIEGRAKNADYVMRTTKIYREAIDSVLDGSYYDKLEYFKKELQKVYNRSYDTGFYFRDINKNHDFQYEIEGNASKYRKIEIGRVVNFYKKVSVAEIELWHDLKIGDTILIIGKTTGCVEEVVKSMQINHKDVEIAKKGERVGVKLNHLVREGDRVYLLKETI.

It belongs to the peptidase U32 family.

This is an uncharacterized protein from Methanocaldococcus jannaschii (strain ATCC 43067 / DSM 2661 / JAL-1 / JCM 10045 / NBRC 100440) (Methanococcus jannaschii).